The sequence spans 228 residues: UPF0758 protein CLB_3028 (228 aa).

The MPN domain maps to 106-228 (KISTPLDVSN…YVSMKEKGTI (123 aa)). Zn(2+) is bound by residues His-177, His-179, and Asp-190. A JAMM motif motif is present at residues 177 to 190 (HNHPSGDPTPSKED).

Belongs to the UPF0758 family.

This Clostridium botulinum (strain ATCC 19397 / Type A) protein is UPF0758 protein CLB_3028.